The sequence spans 149 residues: 3-dehydroquinate dehydratase (149 aa).

The Proton acceptor role is filled by Y24. 3 residues coordinate substrate: N75, H81, and D88. The active-site Proton donor is H101. Substrate is bound by residues 102–103 (LS) and R112.

This sequence belongs to the type-II 3-dehydroquinase family. In terms of assembly, homododecamer.

The enzyme catalyses 3-dehydroquinate = 3-dehydroshikimate + H2O. The protein operates within metabolic intermediate biosynthesis; chorismate biosynthesis; chorismate from D-erythrose 4-phosphate and phosphoenolpyruvate: step 3/7. Functionally, catalyzes a trans-dehydration via an enolate intermediate. The sequence is that of 3-dehydroquinate dehydratase from Bartonella tribocorum (strain CIP 105476 / IBS 506).